The chain runs to 538 residues: MAVSSKHIPAPDLHRVRRALLSVSDKTGLIDFAKALHANGVEILSTGGTAKSIAAAGIPVKDVSEITGFPEIMDGRVKTLHPAVHGGLLAVRNDPEHVAAMEEHGIGGIDLAVINLYPFEEVRFKGGDYDTTVENIDIGGPAMIRASAKNHAYVATVVDPADYADVVAELEKHSGSLPLAFRKKLAAKAFSRTAAYDAAISNWFAEAIDEETPTYRAVAGKLHSVMRYGENPHQTAGFYLTGEKRPGVATATQLQGKQLSYNNINDTDAAFELVAEFDPARTAAVAIIKHANPCGVAEASTIKEAYLKALACDPVSAFGGIVALNRTLDEEAAEEIVKTFTEVIIAPDATEGAQAIVAAKKNLRLLVTGGLPDPRAKGIAAKTVAGGLLVQSRDNGVVDDLDLKVVTKRAPTEAELNDLKFAFRVGKHVKSNAIVYVKDGATVGIGAGQMSRVDSARIAARKAEDAAEAAGLAAPLTKGCVVASDAFFPFADGLLSAVEAGATAVIQPGGSMRDDEVIAAADEHGIAMVMTGMRHFRH.

One can recognise an MGS-like domain in the interval 6-158; that stretch reads KHIPAPDLHR…KNHAYVATVV (153 aa).

The protein belongs to the PurH family.

The catalysed reaction is (6R)-10-formyltetrahydrofolate + 5-amino-1-(5-phospho-beta-D-ribosyl)imidazole-4-carboxamide = 5-formamido-1-(5-phospho-D-ribosyl)imidazole-4-carboxamide + (6S)-5,6,7,8-tetrahydrofolate. The enzyme catalyses IMP + H2O = 5-formamido-1-(5-phospho-D-ribosyl)imidazole-4-carboxamide. It participates in purine metabolism; IMP biosynthesis via de novo pathway; 5-formamido-1-(5-phospho-D-ribosyl)imidazole-4-carboxamide from 5-amino-1-(5-phospho-D-ribosyl)imidazole-4-carboxamide (10-formyl THF route): step 1/1. The protein operates within purine metabolism; IMP biosynthesis via de novo pathway; IMP from 5-formamido-1-(5-phospho-D-ribosyl)imidazole-4-carboxamide: step 1/1. The protein is Bifunctional purine biosynthesis protein PurH of Brucella melitensis biotype 2 (strain ATCC 23457).